Here is a 193-residue protein sequence, read N- to C-terminus: Ribonuclease HII (193 aa).

The RNase H type-2 domain maps to 3–192; the sequence is SLVAGIDEVG…VRAVIDRSSA (190 aa). Asp9, Glu10, and Asp101 together coordinate a divalent metal cation.

Belongs to the RNase HII family. It depends on Mn(2+) as a cofactor. Mg(2+) is required as a cofactor.

It localises to the cytoplasm. The enzyme catalyses Endonucleolytic cleavage to 5'-phosphomonoester.. Endonuclease that specifically degrades the RNA of RNA-DNA hybrids. This is Ribonuclease HII from Methylococcus capsulatus (strain ATCC 33009 / NCIMB 11132 / Bath).